The primary structure comprises 444 residues: Chromosome partition protein MukF (444 aa).

Positions 212–240 (LDETSGNLRELQDTLNAAGDKLQAQLLRI) are leucine-zipper.

Belongs to the MukF family. Interacts, and probably forms a ternary complex, with MukE and MukB via its C-terminal region. The complex formation is stimulated by calcium or magnesium. It is required for an interaction between MukE and MukB.

Its subcellular location is the cytoplasm. It is found in the nucleoid. Functionally, involved in chromosome condensation, segregation and cell cycle progression. May participate in facilitating chromosome segregation by condensation DNA from both sides of a centrally located replisome during cell division. Not required for mini-F plasmid partitioning. Probably acts via its interaction with MukB and MukE. Overexpression results in anucleate cells. It has a calcium binding activity. The protein is Chromosome partition protein MukF of Haemophilus influenzae (strain PittGG).